We begin with the raw amino-acid sequence, 874 residues long: MKSAEIREAFLGFFEEQGHTRVASSSLIPGNDPTLLFTNAGMNQFKDCFLGQEKRAYTRAVTSQKCVRAGGKHNDLENVGYTARHHTFFEMLGNFSFGDYFKRDAITYAWTFLTSEKWLNLPKEKLWVTVYATDDEAYDIWTKEIGVPAERMVRIGDNKGAPYASDNFWTMGDTGPCGPCSEIFFDHGPEIWGGPPGSPEEDGDRYIEIWNNVFMQFNRTADGVLHPLPAPSVDTGMGLERVSAVLQHVHSNYEIDLFQSLLAASAKAIGCSNDNQASLKVVADHIRSCGFLIADGVLPSNEGRGYVLRRIIRRACRHGNKLGAKGSFFYQIVAALVAEMGSAFPELVQQQSHIERVLKGEEEQFAKTLEQGLKILEQDLADLKGTVVPGEVVFKLYDTYGFPMDLTGDIARERNLTLDEAGFEREMDAQRVRARSASSFGMDYNSLVKVDVATQFTGYSATTGSASVVALYKEGQSVTHLNEGEEGVVILDTTPFYAESGGQIGDSGFLHAGDVRFDVSDTTKTGGAFLHHGVVASGSLSVGAQVETQVADEVRDATKLNHSATHLLHAALRQVLGEHVQQKGSLVDSQRLRFDFSHFEAIKPEQLRALEDIVNAEIRKNTEVMTEETDIDTAKKKGAMALFGEKYGDSVRVLSMGGEFSVELCGGIHASRTGDIALFKIVSEGGVAAGVRRIEAVTGAAALAWLNAAEDQLKEAATLVKGNRDNLLDKLTAVLERNRLLEKQLEQLQAKAASAAGDDLSAAALDVKGVKVLATRLDGQDGKALLALVDQLKNKLGRAVILLGSVHEDKVVLVAGVTKDLTGQLKAGDLMKQAAAAVGGKGGGRPDMAQGGGVDAGALDSALALAVPFVEQGI.

Zn(2+) contacts are provided by His562, His566, Cys665, and His669.

It belongs to the class-II aminoacyl-tRNA synthetase family. The cofactor is Zn(2+).

It is found in the cytoplasm. The catalysed reaction is tRNA(Ala) + L-alanine + ATP = L-alanyl-tRNA(Ala) + AMP + diphosphate. In terms of biological role, catalyzes the attachment of alanine to tRNA(Ala) in a two-step reaction: alanine is first activated by ATP to form Ala-AMP and then transferred to the acceptor end of tRNA(Ala). Also edits incorrectly charged Ser-tRNA(Ala) and Gly-tRNA(Ala) via its editing domain. The chain is Alanine--tRNA ligase from Pseudomonas savastanoi pv. phaseolicola (strain 1448A / Race 6) (Pseudomonas syringae pv. phaseolicola (strain 1448A / Race 6)).